The sequence spans 152 residues: Large ribosomal subunit protein bL9 (152 aa).

The protein belongs to the bacterial ribosomal protein bL9 family.

Binds to the 23S rRNA. The sequence is that of Large ribosomal subunit protein bL9 from Gloeothece citriformis (strain PCC 7424) (Cyanothece sp. (strain PCC 7424)).